The following is a 184-amino-acid chain: Large ribosomal subunit protein uL6 (184 aa).

The protein belongs to the universal ribosomal protein uL6 family. Part of the 50S ribosomal subunit.

This protein binds to the 23S rRNA, and is important in its secondary structure. It is located near the subunit interface in the base of the L7/L12 stalk, and near the tRNA binding site of the peptidyltransferase center. This is Large ribosomal subunit protein uL6 from Thermotoga neapolitana (strain ATCC 49049 / DSM 4359 / NBRC 107923 / NS-E).